The chain runs to 1180 residues: Pyruvate carboxylase 2 (1180 aa).

Serine 2 carries the post-translational modification N-acetylserine. The 453-residue stretch at 19-471 (EKNKILVANR…WTTFIDDTPQ (453 aa)) folds into the Biotin carboxylation domain. ATP-binding residues include lysine 137, glutamate 221, and histidine 256. Residues 141–338 (RHLAARANVP…IVSAQIQIAA (198 aa)) enclose the ATP-grasp domain. Arginine 313 is a catalytic residue. Residues 558–825 (TLLMDTTWRD…DTGINVEHVR (268 aa)) enclose the Pyruvate carboxyltransferase domain. Substrate-binding positions include 566–570 (RDAHQ) and arginine 639. A divalent metal cation is bound at residue aspartate 567. A divalent metal cation contacts are provided by lysine 735, histidine 765, and histidine 767. Residue lysine 735 is modified to N6-carboxylysine. Substrate is bound at residue threonine 899. A Biotinyl-binding domain is found at 1095–1170 (KADVHDTHQI…DASDLLVVLE (76 aa)). Residue lysine 1136 is modified to N6-biotinyllysine.

As to quaternary structure, homotetramer. The cofactor is biotin. It depends on Zn(2+) as a cofactor.

It is found in the cytoplasm. It catalyses the reaction hydrogencarbonate + pyruvate + ATP = oxaloacetate + ADP + phosphate + H(+). It participates in carbohydrate biosynthesis; gluconeogenesis. In terms of biological role, pyruvate carboxylase catalyzes a 2-step reaction, involving the ATP-dependent carboxylation of the covalently attached biotin in the first step and the transfer of the carboxyl group to pyruvate in the second. This is Pyruvate carboxylase 2 (PYC2) from Saccharomyces cerevisiae (strain ATCC 204508 / S288c) (Baker's yeast).